Reading from the N-terminus, the 229-residue chain is DNA mismatch repair protein MutH (229 aa).

It belongs to the MutH family.

It localises to the cytoplasm. In terms of biological role, sequence-specific endonuclease that cleaves unmethylated GATC sequences. It is involved in DNA mismatch repair. This chain is DNA mismatch repair protein MutH, found in Escherichia coli O6:K15:H31 (strain 536 / UPEC).